The following is a 128-amino-acid chain: Large ribosomal subunit protein bL12 (128 aa).

It belongs to the bacterial ribosomal protein bL12 family. In terms of assembly, homodimer. Part of the ribosomal stalk of the 50S ribosomal subunit. Forms a multimeric L10(L12)X complex, where L10 forms an elongated spine to which 2 to 4 L12 dimers bind in a sequential fashion. Binds GTP-bound translation factors.

Forms part of the ribosomal stalk which helps the ribosome interact with GTP-bound translation factors. Is thus essential for accurate translation. The polypeptide is Large ribosomal subunit protein bL12 (Rubrobacter xylanophilus (strain DSM 9941 / JCM 11954 / NBRC 16129 / PRD-1)).